Here is a 446-residue protein sequence, read N- to C-terminus: D(1A) dopamine receptor (446 aa).

Topologically, residues 1–23 are extracellular; sequence MRTLNTSTMDGTGLVVERDFSFR. N-linked (GlcNAc...) asparagine glycosylation is present at asparagine 5. A helical transmembrane segment spans residues 24–49; that stretch reads ILTACFLSLLILSTLLGNTLVCAAVI. Over 50–60 the chain is Cytoplasmic; that stretch reads RFRHLRSKVTN. Residues 61–87 traverse the membrane as a helical segment; it reads FFVISLAVSDLLVAVLVMPWKAVAEIA. The Extracellular portion of the chain corresponds to 88–96; the sequence is GFWPFGSFC. Cysteine 96 and cysteine 186 are joined by a disulfide. The chain crosses the membrane as a helical span at residues 97-119; it reads NIWVAFDIMCSTASILNLCVISV. Topologically, residues 120-138 are cytoplasmic; it reads DRYWAISSPFRYERKMTPK. The chain crosses the membrane as a helical span at residues 139–163; sequence AAFILISVAWTLSVLISFIPVQLSW. Over 164–192 the chain is Extracellular; it reads HKAKPTSPSDGNVTSLGKTTHNCDSSLSR. Residues 193-218 form a helical membrane-spanning segment; it reads TYAISSSLISFYIPVAIMIVTYTRIY. Residues 219–272 are Cytoplasmic-facing; that stretch reads RIAQKQIRRISALERAAVHAKNCQTTAGNGNPAECSQPESSFKMSFKRETKVLK. A helical transmembrane segment spans residues 273 to 299; the sequence is TLSVIMGVFVCCWLPFFILNCMVPFCG. Topologically, residues 300–312 are extracellular; that stretch reads SGETKPFCIDSIT. Residues 313-337 form a helical membrane-spanning segment; sequence FDVFVWFGWANSSLNPIIYAFNADF. Residues 338–446 lie on the Cytoplasmic side of the membrane; it reads RKAFSTLLGC…PITQNGQHPT (109 aa). 2 S-palmitoyl cysteine lipidation sites follow: cysteine 347 and cysteine 351.

This sequence belongs to the G-protein coupled receptor 1 family. Interacts with DNAJC14 via its C-terminus. Interacts with DRD2. Interacts with DORIP1.

Its subcellular location is the cell membrane. The protein resides in the endoplasmic reticulum membrane. It localises to the cell projection. The protein localises to the cilium membrane. It is found in the dendrite. Its subcellular location is the dendritic spine. Functionally, dopamine receptor whose activity is mediated by G proteins which activate adenylyl cyclase. This is D(1A) dopamine receptor (DRD1) from Sus scrofa (Pig).